The chain runs to 392 residues: Norsolorinic acid reductase B (392 aa).

D75 serves as a coordination point for NADP(+). Y80 functions as the Proton donor in the catalytic mechanism. Residues S184–D185, Q210, G239–E249, and R311–N319 each bind NADP(+). The tract at residues G242–K263 is disordered. The span at E249–G261 shows a compositional bias: basic and acidic residues.

Belongs to the aldo/keto reductase family. Aldo/keto reductase 2 subfamily.

Its pathway is mycotoxin biosynthesis. Its function is as follows. Norsolorinic acid reductase; part of the fragmented gene cluster that mediates the biosynthesis of dothistromin (DOTH), a polyketide toxin very similar in structure to the aflatoxin precursor, versicolorin B. The first step of the pathway is the conversion of acetate to norsolorinic acid (NOR) and requires the fatty acid synthase subunits hexA and hexB, as well as the polyketide synthase pksA. PksA combines a hexanoyl starter unit and 7 malonyl-CoA extender units to synthesize the precursor NOR. The hexanoyl starter unit is provided to the acyl-carrier protein (ACP) domain by the fungal fatty acid synthase hexA/hexB. The second step is the conversion of NOR to averantin (AVN) and requires the norsolorinic acid ketoreductase nor1, which catalyzes the dehydration of norsolorinic acid to form (1'S)-averantin. The cytochrome P450 monooxygenase avnA then catalyzes the hydroxylation of AVN to 5'hydroxyaverantin (HAVN). The next step is performed by adhA that transforms HAVN to averufin (AVF). Averufin might then be converted to hydroxyversicolorone by cypX and avfA. Hydroxyversicolorone is further converted versiconal hemiacetal acetate (VHA) by moxY. VHA is then the substrate for the versiconal hemiacetal acetate esterase est1 to yield versiconal (VAL). Versicolorin B synthase vbsA then converts VAL to versicolorin B (VERB) by closing the bisfuran ring. Then, the activity of the versicolorin B desaturase verB leads to versicolorin A (VERA). DotB, a predicted chloroperoxidase, may perform epoxidation of the A-ring of VERA. Alternatively, a cytochrome P450, such as cypX or avnA could catalyze this step. It is also possible that another, uncharacterized, cytochrome P450 enzyme is responsible for this step. Opening of the epoxide could potentially be achieved by the epoxide hydrolase epoA. However, epoA seems not to be required for DOTH biosynthesis, but other epoxide hydrolases may have the ability to complement this hydrolysis. Alternatively, opening of the epoxide ring could be achieved non-enzymatically. The next step is the deoxygenation of ring A to yield the 5,8-dihydroxyanthraquinone which is most likely catalyzed by the NADPH dehydrogenase encoded by ver1. The last stages of DOTH biosynthesis are proposed to involve hydroxylation of the bisfuran. OrdB and norB might have oxidative roles here. An alternative possibility is that cytochrome P450 monoogenases such as avnA and cypX might perform these steps in addition to previously proposed steps. The protein is Norsolorinic acid reductase B of Dothistroma septosporum (strain NZE10 / CBS 128990) (Red band needle blight fungus).